Here is a 417-residue protein sequence, read N- to C-terminus: Tyrosine aminotransferase (417 aa).

Lysine 249 bears the N6-(pyridoxal phosphate)lysine mark.

Belongs to the class-I pyridoxal-phosphate-dependent aminotransferase family. In terms of assembly, homodimer. Requires pyridoxal 5'-phosphate as cofactor.

The enzyme catalyses L-tyrosine + 2-oxoglutarate = 3-(4-hydroxyphenyl)pyruvate + L-glutamate. It functions in the pathway amino-acid degradation; L-phenylalanine degradation; acetoacetate and fumarate from L-phenylalanine: step 2/6. Its function is as follows. Transaminase involved in tyrosine breakdown. Converts tyrosine to p-hydroxyphenylpyruvate. Has much lower affinity and transaminase activity towards phenylalanine. This Dictyostelium discoideum (Social amoeba) protein is Tyrosine aminotransferase (tat).